We begin with the raw amino-acid sequence, 423 residues long: Maintenance of mitochondrial morphology protein 1 (423 aa).

Topologically, residues 1–20 (MTIPAPIPDKAESSLSFTQG) are lumenal. A helical membrane pass occupies residues 21–41 (LLLGQLSIVILIGAFIKFFIF). Topologically, residues 42–423 (GDPPSPDVTA…PGSMPGLSMT (382 aa)) are cytoplasmic. One can recognise an SMP-LTD domain in the interval 115–327 (QPESLDWFNV…EPRFQQIELP (213 aa)). Disordered regions lie at residues 332-372 (RKKN…KEVE) and 387-423 (SLDV…LSMT). The segment covering 355 to 372 (RSRDVERDLREEARKEVE) has biased composition (basic and acidic residues).

This sequence belongs to the MMM1 family. Homodimer. Component of the ER-mitochondria encounter structure (ERMES) or MDM complex, composed of MMM1, MDM10, MDM12 and MDM34. An MMM1 homodimer associates with one molecule of MDM12 on each side in a pairwise head-to-tail manner, and the SMP-LTD domains of MMM1 and MDM12 generate a continuous hydrophobic tunnel for phospholipid trafficking.

The protein localises to the endoplasmic reticulum membrane. Its function is as follows. Component of the ERMES/MDM complex, which serves as a molecular tether to connect the endoplasmic reticulum (ER) and mitochondria. Components of this complex are involved in the control of mitochondrial shape and protein biogenesis, and function in nonvesicular lipid trafficking between the ER and mitochondria. The MDM12-MMM1 subcomplex functions in the major beta-barrel assembly pathway that is responsible for biogenesis of all outer membrane beta-barrel proteins, and acts in a late step after the SAM complex. The MDM10-MDM12-MMM1 subcomplex further acts in the TOM40-specific pathway after the action of the MDM12-MMM1 complex. Essential for establishing and maintaining the structure of mitochondria and maintenance of mtDNA nucleoids. The chain is Maintenance of mitochondrial morphology protein 1 from Botryotinia fuckeliana (strain B05.10) (Noble rot fungus).